We begin with the raw amino-acid sequence, 430 residues long: Histidine--tRNA ligase (430 aa).

Belongs to the class-II aminoacyl-tRNA synthetase family. In terms of assembly, homodimer.

Its subcellular location is the cytoplasm. It carries out the reaction tRNA(His) + L-histidine + ATP = L-histidyl-tRNA(His) + AMP + diphosphate + H(+). The sequence is that of Histidine--tRNA ligase from Acaryochloris marina (strain MBIC 11017).